A 458-amino-acid polypeptide reads, in one-letter code: uncharacterized protein (458 aa).

A TRAM domain is found at 8–66 (PVEKNEFIDVVFEDLTHDGAGVAKVKGYPIFVKNGLPGEEAQIKIIKVKKNFAFGRLMK). Residues Cys79, Cys85, Cys88, and Cys166 each coordinate [4Fe-4S] cluster. Residues Gln290, Tyr319, Glu340, and Asp388 each coordinate S-adenosyl-L-methionine. Cys415 functions as the Nucleophile in the catalytic mechanism.

Belongs to the class I-like SAM-binding methyltransferase superfamily. RNA M5U methyltransferase family.

This is an uncharacterized protein from Bacillus cereus (strain ATCC 14579 / DSM 31 / CCUG 7414 / JCM 2152 / NBRC 15305 / NCIMB 9373 / NCTC 2599 / NRRL B-3711).